The chain runs to 110 residues: UPF0060 membrane protein SACE_5620 (110 aa).

4 consecutive transmembrane segments (helical) span residues 8 to 28, 34 to 54, 63 to 83, and 89 to 109; these read VVLFVLAAVAEIGGAWLVWQG, GLLWIGAGVIALGIYGFVATF, ILAAYGGVFVAGSLLWGVVVD, and RWDLIGATICLAGVAVIMYAP.

This sequence belongs to the UPF0060 family.

Its subcellular location is the cell membrane. This Saccharopolyspora erythraea (strain ATCC 11635 / DSM 40517 / JCM 4748 / NBRC 13426 / NCIMB 8594 / NRRL 2338) protein is UPF0060 membrane protein SACE_5620.